Consider the following 163-residue polypeptide: Transcriptional repressor NrdR (163 aa).

A zinc finger spans residues 3–34 (CPSCNSESSRVVDSRSIEMGVSIRRRRECSEC). In terms of domain architecture, ATP-cone spans 46-136 (LLVVKRNGVT…VYKSFNCAED (91 aa)).

It belongs to the NrdR family. Zn(2+) serves as cofactor.

Functionally, negatively regulates transcription of bacterial ribonucleotide reductase nrd genes and operons by binding to NrdR-boxes. The sequence is that of Transcriptional repressor NrdR from Corynebacterium jeikeium (strain K411).